Here is a 97-residue protein sequence, read N- to C-terminus: YcgL domain-containing protein Maqu_1609 (97 aa).

The region spanning 5 to 89 (EFVSVFRSSK…EQDTYIVDFK (85 aa)) is the YcgL domain.

This chain is YcgL domain-containing protein Maqu_1609, found in Marinobacter nauticus (strain ATCC 700491 / DSM 11845 / VT8) (Marinobacter aquaeolei).